Here is a 152-residue protein sequence, read N- to C-terminus: 3-hydroxyacyl-[acyl-carrier-protein] dehydratase FabZ (152 aa).

Residue histidine 58 is part of the active site.

This sequence belongs to the thioester dehydratase family. FabZ subfamily.

The protein resides in the cytoplasm. It carries out the reaction a (3R)-hydroxyacyl-[ACP] = a (2E)-enoyl-[ACP] + H2O. Its function is as follows. Involved in unsaturated fatty acids biosynthesis. Catalyzes the dehydration of short chain beta-hydroxyacyl-ACPs and long chain saturated and unsaturated beta-hydroxyacyl-ACPs. The sequence is that of 3-hydroxyacyl-[acyl-carrier-protein] dehydratase FabZ from Prochlorococcus marinus (strain MIT 9312).